Reading from the N-terminus, the 426-residue chain is Glutamate-1-semialdehyde 2,1-aminomutase (426 aa).

K265 bears the N6-(pyridoxal phosphate)lysine mark.

It belongs to the class-III pyridoxal-phosphate-dependent aminotransferase family. HemL subfamily. As to quaternary structure, homodimer. Requires pyridoxal 5'-phosphate as cofactor.

The protein localises to the cytoplasm. The catalysed reaction is (S)-4-amino-5-oxopentanoate = 5-aminolevulinate. Its pathway is porphyrin-containing compound metabolism; protoporphyrin-IX biosynthesis; 5-aminolevulinate from L-glutamyl-tRNA(Glu): step 2/2. This Salmonella heidelberg (strain SL476) protein is Glutamate-1-semialdehyde 2,1-aminomutase.